The following is a 30-amino-acid chain: Cyclotide hyen-G (30 aa).

The segment at residues 1–30 (GLPCGESCVYIPCISTVLGCSCSNKVCYRD) is a cross-link (cyclopeptide (Gly-Asp)). Cystine bridges form between C4/C20, C8/C22, and C13/C27.

In terms of processing, this is a cyclic peptide. In terms of tissue distribution, detected in stems (at protein level).

Probably participates in a plant defense mechanism. The protein is Cyclotide hyen-G of Pigea enneasperma (Spade flower).